Reading from the N-terminus, the 117-residue chain is Protein P16 (117 aa).

A helical membrane pass occupies residues 7 to 24; the sequence is LYWVGGGLVLILIWLWFR.

Its subcellular location is the virion membrane. Protein of the infection vertex complex, which increases the vertex stability. Anchors the vertex structure to the viral membrane. Essential for viral infectivity. The chain is Protein P16 (XVI) from Enterobacteria phage PRD1 (Bacteriophage PRD1).